Here is a 397-residue protein sequence, read N- to C-terminus: 1-deoxy-D-xylulose 5-phosphate reductoisomerase (397 aa).

8 residues coordinate NADPH: Thr-12, Gly-13, Ser-14, Ile-15, Gly-38, Lys-39, Asn-40, and Asn-126. Lys-127 provides a ligand contact to 1-deoxy-D-xylulose 5-phosphate. Glu-128 lines the NADPH pocket. Asp-152 contacts Mn(2+). Positions 153, 154, 188, and 211 each coordinate 1-deoxy-D-xylulose 5-phosphate. Glu-154 contacts Mn(2+). Gly-217 is a binding site for NADPH. The 1-deoxy-D-xylulose 5-phosphate site is built by Ser-224, Asn-229, Lys-230, and Glu-233. Mn(2+) is bound at residue Glu-233.

The protein belongs to the DXR family. Mg(2+) serves as cofactor. Mn(2+) is required as a cofactor.

It carries out the reaction 2-C-methyl-D-erythritol 4-phosphate + NADP(+) = 1-deoxy-D-xylulose 5-phosphate + NADPH + H(+). The protein operates within isoprenoid biosynthesis; isopentenyl diphosphate biosynthesis via DXP pathway; isopentenyl diphosphate from 1-deoxy-D-xylulose 5-phosphate: step 1/6. Functionally, catalyzes the NADPH-dependent rearrangement and reduction of 1-deoxy-D-xylulose-5-phosphate (DXP) to 2-C-methyl-D-erythritol 4-phosphate (MEP). This chain is 1-deoxy-D-xylulose 5-phosphate reductoisomerase, found in Haemophilus influenzae (strain PittEE).